A 952-amino-acid chain; its full sequence is Pentatricopeptide repeat-containing protein At5g04810, chloroplastic (952 aa).

The N-terminal 60 residues, 1 to 60, are a transit peptide targeting the chloroplast; the sequence is MDNGGSVLSLSAPHFPYSATILRRHSPVASISFSLKQPPPQPPEPPESPPDLRRPEKSIG. 2 disordered regions span residues 30–95 and 115–163; these read SISF…VSPL and LRLS…EFRQ. The segment covering 37 to 49 has biased composition (pro residues); the sequence is QPPPQPPEPPESP. Over residues 58 to 68 the composition is skewed to low complexity; sequence SIGSSSSSSSP. Pro residues predominate over residues 122-133; the sequence is SPPPPPPPPPPV. The segment covering 137 to 163 has biased composition (basic and acidic residues); sequence TQFRDEFRSDTKPPEEETRNPQQEFRQ. The RRM domain maps to 167-238; the sequence is IFVGNLPTWI…VEFHGRILTV (72 aa). Residues 259 to 280 are compositionally biased toward basic and acidic residues; the sequence is EGEEDTKMSNKSSWHQEREGSR. The tract at residues 259 to 281 is disordered; that stretch reads EGEEDTKMSNKSSWHQEREGSRK. 15 PPR repeats span residues 308-342, 343-377, 378-412, 413-447, 448-482, 483-517, 518-552, 553-587, 588-622, 623-657, 658-692, 693-727, 728-762, 763-797, and 798-832; these read SRTEFGLMVKFYGRRGDMHRARETFERMRARGITP, TSRIYTSLIHAYAVGRDMDEALSCVRKMKEEGIEM, SLVTYSVIVGGFSKAGHAEAADYWFDEAKRIHKTL, NASIYGKIIYAHCQTCNMERAEALVREMEEEGIDA, PIAIYHTMMDGYTMVADEKKGLVVFKRLKECGFTP, TVVTYGCLINLYTKVGKISKALEVSRVMKEEGVKH, NLKTYSMMINGFVKLKDWANAFAVFEDMVKEGMKP, DVILYNNIISAFCGMGNMDRAIQTVKEMQKLRHRP, TTRTFMPIIHGYAKSGDMRRSLEVFDMMRRCGCVP, TVHTFNGLINGLVEKRQMEKAVEILDEMTLAGVSA, NEHTYTKIMQGYASVGDTGKAFEYFTRLQNEGLDV, DIFTYEALLKACCKSGRMQSALAVTKEMSARNIPR, NSFVYNILIDGWARRGDVWEAADLIQQMKKEGVKP, DIHTYTSFISACSKAGDMNRATQTIEEMEALGVKP, and NIKTYTTLIKGWARASLPEKALSCYEEMKAMGIKP. Positions 918 to 952 are disordered; that stretch reads DQVSDVDSDEDDVDGEDGEDDEDVNSVSDLLSPYK. Positions 921-941 are enriched in acidic residues; sequence SDVDSDEDDVDGEDGEDDEDV.

The protein belongs to the PPR family. P subfamily.

It localises to the plastid. Its subcellular location is the chloroplast. Functionally, may play a role in the plastid ribosome biogenesis. The protein is Pentatricopeptide repeat-containing protein At5g04810, chloroplastic (PPR4) of Arabidopsis thaliana (Mouse-ear cress).